The following is a 309-amino-acid chain: Sulfate adenylyltransferase subunit 2 (309 aa).

This sequence belongs to the PAPS reductase family. CysD subfamily. Heterodimer composed of CysD, the smaller subunit, and CysN.

It catalyses the reaction sulfate + ATP + H(+) = adenosine 5'-phosphosulfate + diphosphate. It functions in the pathway sulfur metabolism; hydrogen sulfide biosynthesis; sulfite from sulfate: step 1/3. Its function is as follows. With CysN forms the ATP sulfurylase (ATPS) that catalyzes the adenylation of sulfate producing adenosine 5'-phosphosulfate (APS) and diphosphate, the first enzymatic step in sulfur assimilation pathway. APS synthesis involves the formation of a high-energy phosphoric-sulfuric acid anhydride bond driven by GTP hydrolysis by CysN coupled to ATP hydrolysis by CysD. The polypeptide is Sulfate adenylyltransferase subunit 2 (Methylorubrum populi (strain ATCC BAA-705 / NCIMB 13946 / BJ001) (Methylobacterium populi)).